The sequence spans 180 residues: ATP-dependent protease subunit HslV (180 aa).

Threonine 8 is a catalytic residue. Na(+)-binding residues include alanine 165, cysteine 168, and threonine 171.

The protein belongs to the peptidase T1B family. HslV subfamily. In terms of assembly, a double ring-shaped homohexamer of HslV is capped on each side by a ring-shaped HslU homohexamer. The assembly of the HslU/HslV complex is dependent on binding of ATP.

The protein localises to the cytoplasm. The enzyme catalyses ATP-dependent cleavage of peptide bonds with broad specificity.. With respect to regulation, allosterically activated by HslU binding. Protease subunit of a proteasome-like degradation complex believed to be a general protein degrading machinery. The polypeptide is ATP-dependent protease subunit HslV (Macrococcus caseolyticus (strain JCSC5402) (Macrococcoides caseolyticum)).